A 382-amino-acid polypeptide reads, in one-letter code: D-galactonate dehydratase (382 aa).

Asp183 contributes to the Mg(2+) binding site. His185 (proton donor) is an active-site residue. Glu209 and Glu235 together coordinate Mg(2+). Catalysis depends on His285, which acts as the Proton acceptor.

Belongs to the mandelate racemase/muconate lactonizing enzyme family. GalD subfamily. The cofactor is Mg(2+).

The catalysed reaction is D-galactonate = 2-dehydro-3-deoxy-D-galactonate + H2O. It functions in the pathway carbohydrate acid metabolism; D-galactonate degradation; D-glyceraldehyde 3-phosphate and pyruvate from D-galactonate: step 1/3. Functionally, catalyzes the dehydration of D-galactonate to 2-keto-3-deoxy-D-galactonate. This is D-galactonate dehydratase from Salmonella paratyphi A (strain AKU_12601).